Here is a 309-residue protein sequence, read N- to C-terminus: Carbamate kinase 3 (309 aa).

It belongs to the carbamate kinase family.

It localises to the cytoplasm. It carries out the reaction hydrogencarbonate + NH4(+) + ATP = carbamoyl phosphate + ADP + H2O + H(+). The protein operates within metabolic intermediate metabolism; carbamoyl phosphate degradation; CO(2) and NH(3) from carbamoyl phosphate: step 1/1. This is Carbamate kinase 3 (arcC3) from Staphylococcus aureus (strain USA300).